A 460-amino-acid chain; its full sequence is ATP synthase subunit beta (460 aa).

Residue 150–157 coordinates ATP; that stretch reads GGAGVGKT.

It belongs to the ATPase alpha/beta chains family. In terms of assembly, F-type ATPases have 2 components, CF(1) - the catalytic core - and CF(0) - the membrane proton channel. CF(1) has five subunits: alpha(3), beta(3), gamma(1), delta(1), epsilon(1). CF(0) has three main subunits: a(1), b(2) and c(9-12). The alpha and beta chains form an alternating ring which encloses part of the gamma chain. CF(1) is attached to CF(0) by a central stalk formed by the gamma and epsilon chains, while a peripheral stalk is formed by the delta and b chains.

Its subcellular location is the cell inner membrane. The catalysed reaction is ATP + H2O + 4 H(+)(in) = ADP + phosphate + 5 H(+)(out). Its function is as follows. Produces ATP from ADP in the presence of a proton gradient across the membrane. The catalytic sites are hosted primarily by the beta subunits. In Edwardsiella ictaluri (strain 93-146), this protein is ATP synthase subunit beta.